Here is a 520-residue protein sequence, read N- to C-terminus: MVSIDLTTIPEEPGCYQFKDETGTILYVGKAKNLKKRVSSYFQKKSITPRIDILVSLIRDIDVIVTSSEVEALILENNLIKKYQPKYNIDLKDAKSYAFIQISNDPFPRIGIARDRTVKKTGTLYGPFVSAAERDQILKFVKQTFHLRTCKKMTKRACLRSHLGTCAAPCTGKISEPEYQYLVKSADYLLKGKSQDLIYDLRKEMETFAAAEEYEKALVIRDRIAAIENLSERQYVQRQKKSDEHIINYLVSGDTVYLILFHVERGSLTSKEEFVFPETEDFLDEFILQYYSSTKPPNELILPSLPGSGMEEYLTHIRGSHVTLTIPKQGEKKHLLDLAYKNLEVSFFTGKMRLAELGEALHMDTAPEVIECFDISHLRGTGTVASMVSFRDGKPDKRNYRRYKINSAGPSDDYAAMAEVVKRRYSRLLREKSPMPDLIVVDGGPGQLKSAHAILEELSLPIPIISIAKREEEIYIPGRNTPLSIQKKSPASLLIQEIRDEAHRFAITYQKKLRQKSIKE.

The GIY-YIG domain occupies 11–89; sequence EEPGCYQFKD…IKKYQPKYNI (79 aa). The region spanning 195–230 is the UVR domain; it reads QDLIYDLRKEMETFAAAEEYEKALVIRDRIAAIENL.

This sequence belongs to the UvrC family. In terms of assembly, interacts with UvrB in an incision complex.

The protein localises to the cytoplasm. Its function is as follows. The UvrABC repair system catalyzes the recognition and processing of DNA lesions. UvrC both incises the 5' and 3' sides of the lesion. The N-terminal half is responsible for the 3' incision and the C-terminal half is responsible for the 5' incision. The polypeptide is UvrABC system protein C (Methanospirillum hungatei JF-1 (strain ATCC 27890 / DSM 864 / NBRC 100397 / JF-1)).